The following is a 173-amino-acid chain: Pathogenesis-related protein 1C (173 aa).

The signal sequence occupies residues 1–20; sequence MSTSAVLFLLLAVFAAGASA.

Belongs to the thaumatin family.

This Hordeum vulgare (Barley) protein is Pathogenesis-related protein 1C.